We begin with the raw amino-acid sequence, 150 residues long: Endoribonuclease YbeY (150 aa).

The Zn(2+) site is built by His116, His120, and His126.

Belongs to the endoribonuclease YbeY family. Zn(2+) is required as a cofactor.

The protein localises to the cytoplasm. Its function is as follows. Single strand-specific metallo-endoribonuclease involved in late-stage 70S ribosome quality control and in maturation of the 3' terminus of the 16S rRNA. This is Endoribonuclease YbeY from Beutenbergia cavernae (strain ATCC BAA-8 / DSM 12333 / CCUG 43141 / JCM 11478 / NBRC 16432 / NCIMB 13614 / HKI 0122).